A 288-amino-acid polypeptide reads, in one-letter code: THO complex subunit 4D (288 aa).

Residues 1 to 55 are disordered; that stretch reads MSGALNMTLDEIVKRGKTARSGGRGISRGRGRGRGGGGRGAGPARRGPLAVNARP. At serine 2 the chain carries N-acetylserine. The RRM domain occupies 93–170; that stretch reads TRLHVTNLDQ…RPMRLEILGG (78 aa). Residues 201-288 form a disordered region; it reads QGGGGRGRVR…SYHADAMNTS (88 aa). The span at 232 to 260 shows a compositional bias: gly residues; that stretch reads QGGGMRGGRGGFRARGRGNGGRGRGGGRG. The span at 264-281 shows a compositional bias: basic and acidic residues; sequence KPVEKSAADLDKDLESYH.

The protein belongs to the ALYREF family. As to quaternary structure, interacts with PARP1. Interacts with EIF4A3.

The protein resides in the nucleus. It localises to the nucleoplasm. The protein localises to the nucleolus. In terms of biological role, export adapter involved in nuclear export of spliced and unspliced mRNA. Plays a role in disease resistance. Mediates multiple defense responses triggered by NEP1, including stomatal closure, hypersensitive cell death (HCD) and defense-related gene expression. This Arabidopsis thaliana (Mouse-ear cress) protein is THO complex subunit 4D.